The primary structure comprises 244 residues: MSQFSLSQCVSMTAEQQEQSLAEINLRLEMMDAHQRVNWALENLPGEFVLSSSFGIQAAVCLHLVTQEYPDIPVILTDTGYLFPETYQFIDKLTTQLKLNLQVFSAEHSPAWQEARYGKLWEQGVEGIERYNQINKVEPMNRALKNLRAQSWFAGLRRQQSESRSKLPVLAVQRGVFKILPIIDWDNRRVHQYLTKHGLEYHPLWEQGYLSVGDIHTTQKWEPGMSEEQTRFFGLKRECGLHEN.

The active-site Nucleophile; cysteine thiosulfonate intermediate is Cys239.

Belongs to the PAPS reductase family. CysH subfamily.

The protein resides in the cytoplasm. The enzyme catalyses [thioredoxin]-disulfide + sulfite + adenosine 3',5'-bisphosphate + 2 H(+) = [thioredoxin]-dithiol + 3'-phosphoadenylyl sulfate. It participates in sulfur metabolism; hydrogen sulfide biosynthesis; sulfite from sulfate: step 3/3. Catalyzes the formation of sulfite from phosphoadenosine 5'-phosphosulfate (PAPS) using thioredoxin as an electron donor. The polypeptide is Phosphoadenosine 5'-phosphosulfate reductase (Photorhabdus laumondii subsp. laumondii (strain DSM 15139 / CIP 105565 / TT01) (Photorhabdus luminescens subsp. laumondii)).